A 359-amino-acid chain; its full sequence is Glycerol-3-phosphate dehydrogenase [NAD(P)+] (359 aa).

Thr11, Trp12, Arg32, and Lys107 together coordinate NADPH. The sn-glycerol 3-phosphate site is built by Lys107 and Gly138. Ala142 contributes to the NADPH binding site. Sn-glycerol 3-phosphate contacts are provided by Lys193, Asp246, Ser256, Arg257, and Asn258. Residue Lys193 is the Proton acceptor of the active site. Residue Arg257 participates in NADPH binding. NADPH contacts are provided by Val281 and Glu283.

This sequence belongs to the NAD-dependent glycerol-3-phosphate dehydrogenase family.

The protein resides in the cytoplasm. It carries out the reaction sn-glycerol 3-phosphate + NAD(+) = dihydroxyacetone phosphate + NADH + H(+). The catalysed reaction is sn-glycerol 3-phosphate + NADP(+) = dihydroxyacetone phosphate + NADPH + H(+). Its pathway is membrane lipid metabolism; glycerophospholipid metabolism. Its function is as follows. Catalyzes the reduction of the glycolytic intermediate dihydroxyacetone phosphate (DHAP) to sn-glycerol 3-phosphate (G3P), the key precursor for phospholipid synthesis. This chain is Glycerol-3-phosphate dehydrogenase [NAD(P)+], found in Dehalococcoides mccartyi (strain ATCC BAA-2100 / JCM 16839 / KCTC 5957 / BAV1).